Here is a 288-residue protein sequence, read N- to C-terminus: Acetyl-coenzyme A carboxylase carboxyl transferase subunit beta (288 aa).

The 255-residue stretch at 34–288 (LFAKCPACKH…HLVSFHGGGQ (255 aa)) folds into the CoA carboxyltransferase N-terminal domain. Zn(2+) contacts are provided by Cys38, Cys41, Cys56, and Cys59. The C4-type zinc-finger motif lies at 38–59 (CPACKHMIYKKDLGLAKICPTC).

It belongs to the AccD/PCCB family. In terms of assembly, acetyl-CoA carboxylase is a heterohexamer composed of biotin carboxyl carrier protein (AccB), biotin carboxylase (AccC) and two subunits each of ACCase subunit alpha (AccA) and ACCase subunit beta (AccD). The cofactor is Zn(2+).

It localises to the cytoplasm. It carries out the reaction N(6)-carboxybiotinyl-L-lysyl-[protein] + acetyl-CoA = N(6)-biotinyl-L-lysyl-[protein] + malonyl-CoA. Its pathway is lipid metabolism; malonyl-CoA biosynthesis; malonyl-CoA from acetyl-CoA: step 1/1. In terms of biological role, component of the acetyl coenzyme A carboxylase (ACC) complex. Biotin carboxylase (BC) catalyzes the carboxylation of biotin on its carrier protein (BCCP) and then the CO(2) group is transferred by the transcarboxylase to acetyl-CoA to form malonyl-CoA. In Streptococcus pyogenes serotype M49 (strain NZ131), this protein is Acetyl-coenzyme A carboxylase carboxyl transferase subunit beta.